A 389-amino-acid polypeptide reads, in one-letter code: Sulfate adenylyltransferase (389 aa).

It belongs to the sulfate adenylyltransferase family.

It catalyses the reaction sulfate + ATP + H(+) = adenosine 5'-phosphosulfate + diphosphate. Its pathway is sulfur metabolism; hydrogen sulfide biosynthesis; sulfite from sulfate: step 1/3. The chain is Sulfate adenylyltransferase from Desulforamulus reducens (strain ATCC BAA-1160 / DSM 100696 / MI-1) (Desulfotomaculum reducens).